Here is a 1203-residue protein sequence, read N- to C-terminus: Regulator of telomere elongation helicase 1 (1203 aa).

Residues 7–296 form the Helicase ATP-binding domain; the sequence is NGVTVDFPFQ…ARVTQQGELQ (290 aa). 42-49 is an ATP binding site; it reads SPTGTGKT. 4 residues coordinate [4Fe-4S] cluster: cysteine 145, cysteine 163, cysteine 172, and cysteine 207. The short motif at 151 to 167 is the Nuclear localization signal element; it reads KKQESNHMQISLCRKKV. Positions 250–253 match the DEAH box motif; that stretch reads DEAH. The Nuclear localization signal motif lies at 871-877; that stretch reads QKGGRKK. 2 disordered regions span residues 998–1020 and 1120–1203; these read QLDP…TSKG and TTGK…RSKQ. Residues 1123–1134 are compositionally biased toward basic and acidic residues; sequence KDLELEGPRDES. A PIP-box motif is present at residues 1160 to 1167; the sequence is QSKISSFF. Residues 1169–1181 are compositionally biased toward basic and acidic residues; the sequence is QRPDESVRSDDTT.

This sequence belongs to the helicase family. RAD3/XPD subfamily. In terms of assembly, interacts with TERF1. Interacts (via PIP-box) with PCNA; the interaction is direct and essential for suppressing telomere fragility. Interacts with MMS19; the interaction mediates the association of RTEL1 with the cytosolic iron-sulfur protein assembly (CIA) complex.

The protein resides in the nucleus. It catalyses the reaction ATP + H2O = ADP + phosphate + H(+). In terms of biological role, a probable ATP-dependent DNA helicase implicated in telomere-length regulation, DNA repair and the maintenance of genomic stability. Acts as an anti-recombinase to counteract toxic recombination and limit crossover during meiosis. Regulates meiotic recombination and crossover homeostasis by physically dissociating strand invasion events and thereby promotes noncrossover repair by meiotic synthesis dependent strand annealing (SDSA) as well as disassembly of D loop recombination intermediates. Also disassembles T loops and prevents telomere fragility by counteracting telomeric G4-DNA structures, which together ensure the dynamics and stability of the telomere. The sequence is that of Regulator of telomere elongation helicase 1 (Rtel1) from Mus spretus (Western Mediterranean mouse).